The chain runs to 369 residues: Galactose-1-phosphate uridylyltransferase (369 aa).

2 residues coordinate Zn(2+): C54 and C57. UDP-alpha-D-glucose-binding positions include A63 and 79–80 (ND). H127 lines the Zn(2+) pocket. N172 lines the UDP-alpha-D-glucose pocket. H183 is a Zn(2+) binding site. Residue H185 is the Tele-UMP-histidine intermediate of the active site. Q187 serves as a coordination point for UDP-alpha-D-glucose. Fe cation contacts are provided by E201, H300, H317, and H319. UDP-alpha-D-glucose-binding positions include 332–335 (KFCV) and 337–338 (FE).

This sequence belongs to the galactose-1-phosphate uridylyltransferase type 1 family. Homodimer. Requires Zn(2+) as cofactor.

The catalysed reaction is alpha-D-galactose 1-phosphate + UDP-alpha-D-glucose = alpha-D-glucose 1-phosphate + UDP-alpha-D-galactose. It participates in carbohydrate metabolism; galactose metabolism. This chain is Galactose-1-phosphate uridylyltransferase (gal7), found in Schizosaccharomyces pombe (strain 972 / ATCC 24843) (Fission yeast).